Reading from the N-terminus, the 831-residue chain is Histone acetyltransferase SAS3 (831 aa).

One can recognise an MYST-type HAT domain in the interval 267–573 (VWFSQIEYIV…VKYDKLLWEP (307 aa)). The segment at 300 to 325 (VFICEFCLKYMTSRYTFYRHQLKCLT) adopts a C2HC MYST-type zinc-finger fold. An N6-acetyllysine; by autocatalysis modification is found at lysine 367. Residues 419–421 (ILT) and 426–432 (QRKGYGQ) each bind acetyl-CoA. Residue glutamate 452 is the Proton donor/acceptor of the active site. Serine 456 serves as a coordination point for acetyl-CoA. Disordered regions lie at residues 614–639 (ENYN…KTSK) and 719–813 (PLGN…SHIR). Positions 621 to 633 (AHNKRRRRRRRSS) are enriched in basic residues. Composition is skewed to acidic residues over residues 736-746 (EQDEVENDVDT) and 755-794 (KEDE…DDDE). The span at 795–812 (DGKRKGQEQDENDIESHI) shows a compositional bias: basic and acidic residues.

This sequence belongs to the MYST (SAS/MOZ) family. Component of the NuA3 histone acetyltransferase (HAT) complex. The NuA3 HAT complex has 2 functionally distinct forms that participate in transcription. The NuA3a HAT complex is composed of at least NTO1, SAS3, TAF14, YNG1 and EAF6. The NuA3b HAT complex contains an additional subunit, PDP3. SAS3 interacts with CDC68/SPT16. Autoacetylation at Lys-367 is required for proper function.

It localises to the nucleus. It carries out the reaction L-lysyl-[protein] + acetyl-CoA = N(6)-acetyl-L-lysyl-[protein] + CoA + H(+). Catalytic component of the NuA3 histone acetyltransferase complex, that acetylates H3K14. The NuA3 HAT complex has 2 functionally distinct forms. NuA3a binds H3K4me3, through the PHD finger of YNG1, and acetylates H3K14 at the promoter region of actively transcribed genes to promote transcription initiation. NuA3b binds H3K36me3 at the coding regions of actively transcribed genes, through the PWWP domain of PDP3, and coordinates transcription elongation. In vitro, SAS3 acetylates free histones H3 and H4. It is involved in silencing the HMR locus. This Saccharomyces cerevisiae (strain ATCC 204508 / S288c) (Baker's yeast) protein is Histone acetyltransferase SAS3.